Consider the following 67-residue polypeptide: uncharacterized protein (67 aa).

2 helical membrane passes run 6 to 26 (GQLWIVFMWVSGVVCGICVLM) and 38 to 58 (NNIIIIIIIIMMIKIMKIIII).

It localises to the membrane. This is an uncharacterized protein from Dictyostelium discoideum (Social amoeba).